The sequence spans 1409 residues: Protein three rows (1409 aa).

The separase cleavage-site stretch occupies residues 1052–1058 (VEPIRKQ). Disordered stretches follow at residues 1260–1284 (PIGC…SDHV) and 1297–1409 (DDAA…RQRN). Composition is skewed to low complexity over residues 1264 to 1273 (SNSSSSSSKS) and 1300 to 1310 (ASVSASTPAPS).

As to quaternary structure, interacts with pim and Sse. Cleavage of thr contributes to inactivation of Sse.

The protein resides in the cytoplasm. Its function is as follows. Required specifically for chromosome disjunction during all mitoses; maternally provided protein is sufficient until mitosis 14 then zygotic protein is required. Involved in formation and/or maintenance of epithelial structures: bud extension during Malpighian tubule development, and foregut and hindgut morphogenesis. The sequence is that of Protein three rows (thr) from Drosophila pseudoobscura pseudoobscura (Fruit fly).